The primary structure comprises 533 residues: Probable RNA-binding protein 46 (533 aa).

3 RRM domains span residues 61–139, 141–223, and 236–308; these read CEVF…VSLD, CRLF…WADP, and KVLY…LAKP. The interval 338–362 is disordered; the sequence is ESHSKSLGKPPTLPTRLNGQHSPSP.

As to quaternary structure, interacts with YTHDC2, MEIOC, MOV10, CNOT6L, DDX4, UPF1 and PABPC1. Expressed in the testis and ovary (at protein level). Expressed in spermatogonia and spermatocytes in testis (at protein level).

The protein localises to the cytoplasm. Essential for male and female fertility, playing a crucial role in regulating germ cell development by ensuring the proper progression of meiosis prophase I. Regulates mitotic-to-meiotic transition in spermatogenesis by forming a complex with MEIOC and YTHDC2 which recognizes and down-regulates mitotic transcripts for a successful meiotic entry. Required for normal synaptonemal complex formation during meiosis, binding meiotic cohesin subunit mRNAs containing GCCUAU/GUUCGA motifs in their 3'UTRs regions and positively regulating their translation. Required for spermatogonial differentiation in both developing and adult testis. This chain is Probable RNA-binding protein 46, found in Mus musculus (Mouse).